We begin with the raw amino-acid sequence, 265 residues long: Taurine import ATP-binding protein TauB (265 aa).

The 230-residue stretch at 7–236 (QNLNMIFKTP…MGIDGDLREI (230 aa)) folds into the ABC transporter domain. 41–48 (GPSGCGKT) contributes to the ATP binding site.

This sequence belongs to the ABC transporter superfamily. Taurine importer (TC 3.A.1.17.1) family. The complex is composed of two ATP-binding proteins (TauB), two transmembrane proteins (TauC) and a solute-binding protein (TauA).

It is found in the cell inner membrane. It catalyses the reaction taurine(out) + ATP + H2O = taurine(in) + ADP + phosphate + H(+). Functionally, part of the ABC transporter complex TauABC involved in taurine import. Responsible for energy coupling to the transport system. The polypeptide is Taurine import ATP-binding protein TauB (Pelagibacter ubique (strain HTCC1062)).